The chain runs to 363 residues: Aminomethyltransferase (363 aa).

This sequence belongs to the GcvT family. As to quaternary structure, the glycine cleavage system is composed of four proteins: P, T, L and H.

The enzyme catalyses N(6)-[(R)-S(8)-aminomethyldihydrolipoyl]-L-lysyl-[protein] + (6S)-5,6,7,8-tetrahydrofolate = N(6)-[(R)-dihydrolipoyl]-L-lysyl-[protein] + (6R)-5,10-methylene-5,6,7,8-tetrahydrofolate + NH4(+). The glycine cleavage system catalyzes the degradation of glycine. The protein is Aminomethyltransferase of Picosynechococcus sp. (strain ATCC 27264 / PCC 7002 / PR-6) (Agmenellum quadruplicatum).